The primary structure comprises 195 residues: MREEILELTRNTKETQISMKLKIYGSGVAKISTGIGFFDHMLEAFTKHSLLDLEISCKGDTHVDFHHSVEDVGIVLGQLLNEALYPLSGVERFGEASVVMDEAAVFCALDLSNRAYLVYENFNENAKVGEFDTELVEEFFRAVAINSAITLHLNQIRGKNTHHIIEATFKSFAVALRRALAKNARIGTPSTKGVL.

The protein belongs to the imidazoleglycerol-phosphate dehydratase family.

Its subcellular location is the cytoplasm. It catalyses the reaction D-erythro-1-(imidazol-4-yl)glycerol 3-phosphate = 3-(imidazol-4-yl)-2-oxopropyl phosphate + H2O. It participates in amino-acid biosynthesis; L-histidine biosynthesis; L-histidine from 5-phospho-alpha-D-ribose 1-diphosphate: step 6/9. The polypeptide is Imidazoleglycerol-phosphate dehydratase (Campylobacter concisus (strain 13826)).